We begin with the raw amino-acid sequence, 121 residues long: Dihydroneopterin aldolase (121 aa).

Residues E16 and M111 each coordinate substrate.

Belongs to the archaeal dihydroneopterin aldolase family. Homotetramer.

It carries out the reaction 7,8-dihydroneopterin = 6-hydroxymethyl-7,8-dihydropterin + glycolaldehyde. It functions in the pathway cofactor biosynthesis; 5,6,7,8-tetrahydromethanopterin biosynthesis. Functionally, catalyzes the conversion of 7,8-dihydroneopterin (H2Neo) to 6-hydroxymethyl-7,8-dihydropterin (6-HMD). This is Dihydroneopterin aldolase from Methanopyrus kandleri (strain AV19 / DSM 6324 / JCM 9639 / NBRC 100938).